Reading from the N-terminus, the 70-residue chain is Melittin (70 aa).

An N-terminal signal peptide occupies residues 1 to 21 (MKFLVNVALVFMVVYISFIYA). Positions 22 to 43 (APEPEPAPEAEAEADAEADPEA) are cleaved as a propeptide — removed by a dipeptidylpeptidase. Position 44 is an N-formylglycine; partial (G44). Q69 carries the post-translational modification Glutamine amide.

It belongs to the melittin family. As to quaternary structure, monomer (in solution and for integration into membranes), homotetramer (in solution and potentially as a toroidal pore in membranes), and potenially homomultimer (as a toroidal pore in membranes). As to expression, expressed by the venom gland.

The protein resides in the secreted. The protein localises to the target cell membrane. Functionally, main toxin of bee venom with strong hemolytic activity and antimicrobial activity. It has enhancing effects on bee venom phospholipase A2 activity. This amphipathic toxin binds to negatively charged membrane surface and forms pore by inserting into lipid bilayers inducing the leakage of ions and molecules and the enhancement of permeability that ultimately leads to cell lysis. It acts as a voltage-gated pore with higher selectivity for anions over cations. The ion conductance has been shown to be voltage-dependent. Self-association of melittin in membranes is promoted by high ionic strength, but not by the presence of negatively charged lipids. In vivo, intradermal injection into healthy human volunteers produce sharp pain sensation and an inflammatory response. It produces pain by activating primary nociceptor cells directly and indirectly due to its ability to activate plasma membrane phospholipase A2 and its pore-forming activity. The chain is Melittin (MELT) from Apis cerana cerana (Oriental honeybee).